Reading from the N-terminus, the 433-residue chain is MAKIVKVIGREIIDSRGNPTVEAEVHLEGGFVGLAAAPSGASTGSREALELRDGDKARFLGKGVLKAVSAVNNEIATALVGKEASNQAEIDQIMIELDGTENKSKFGANAILAVSLANAKAAAASKGMPLYAWIAELNGTPGVYSMPLPMMNIINGGEHADNNVDIQEFMIQPVGAKTLKEALRIGAEVFHNLAKVLKGKGLSTAVGDEGGFAPNLESNAAALACIKEAVEKAGYVLGKDVTLAMDCASSEFYNKENGMYEMKGEGKSFTSQEFTHYLEGLCKEYPIVSIEDGQDESDWDGFAYQTKVLGDKVQLVGDDLFVTNTKILKEGIEKGIANSILIKFNQIGSLTETLAAIKMAKDAGYTAVISHRSGETEDATIADLAVGTAAGQIKTGSMSRSDRIAKYNQLIRIEEALGEKAPFLGLKAVKGQA.

Gln167 is a (2R)-2-phosphoglycerate binding site. The active-site Proton donor is Glu209. Residues Asp246, Glu291, and Asp318 each coordinate Mg(2+). (2R)-2-phosphoglycerate is bound by residues Lys343, Arg372, Ser373, and Lys394. The active-site Proton acceptor is Lys343.

The protein belongs to the enolase family. In terms of assembly, component of the RNA degradosome, a multiprotein complex involved in RNA processing and mRNA degradation. Mg(2+) serves as cofactor.

It is found in the cytoplasm. The protein localises to the secreted. It localises to the cell surface. The enzyme catalyses (2R)-2-phosphoglycerate = phosphoenolpyruvate + H2O. It participates in carbohydrate degradation; glycolysis; pyruvate from D-glyceraldehyde 3-phosphate: step 4/5. In terms of biological role, catalyzes the reversible conversion of 2-phosphoglycerate (2-PG) into phosphoenolpyruvate (PEP). It is essential for the degradation of carbohydrates via glycolysis. The protein is Enolase of Histophilus somni (strain 129Pt) (Haemophilus somnus).